The sequence spans 500 residues: tRNA (guanine(37)-N(1))-methyltransferase (500 aa).

Residues His215, 253–254 (DL), 281–282 (DA), and Asn312 contribute to the S-adenosyl-L-methionine site. The segment at 463-500 (QIVAKKTPKPAPRPLPAKNKTTPDTNKMETDLTKLEMK) is disordered. The span at 488 to 500 (NKMETDLTKLEMK) shows a compositional bias: basic and acidic residues.

Belongs to the class I-like SAM-binding methyltransferase superfamily. TRM5/TYW2 family. Monomer.

It localises to the mitochondrion matrix. The protein resides in the nucleus. It is found in the cytoplasm. It carries out the reaction guanosine(37) in tRNA + S-adenosyl-L-methionine = N(1)-methylguanosine(37) in tRNA + S-adenosyl-L-homocysteine + H(+). Functionally, specifically methylates the N1 position of guanosine-37 in various cytoplasmic and mitochondrial tRNAs. Methylation is not dependent on the nature of the nucleoside 5' of the target nucleoside. This is the first step in the biosynthesis of wybutosine (yW), a modified base adjacent to the anticodon of tRNAs and required for accurate decoding. The protein is tRNA (guanine(37)-N(1))-methyltransferase of Anopheles darlingi (Mosquito).